The chain runs to 399 residues: Accessory Sec system protein translocase subunit SecY2 (399 aa).

Transmembrane regions (helical) follow at residues 14-34 (ILFT…SIVG), 60-80 (LNVF…IMLL), 102-122 (IITI…YIHN), 128-148 (SNII…VWLA), 152-172 (ITYG…KSLF), 184-204 (VLLL…LLFI), 238-258 (ISIM…NLIA), 272-292 (FANP…SYLL), 335-355 (WTGA…TLLV), and 362-382 (IYFS…GETI).

The protein belongs to the SecY/SEC61-alpha family. SecY2 subfamily. Component of the accessory SecA2/SecY2 protein translocase complex required to export cell wall proteins. May form heterotrimers with SecE and SecG subunits.

The protein localises to the cell membrane. In terms of biological role, part of the accessory SecA2/SecY2 system specifically required for export of possible cell wall proteins. The central subunit of a protein translocation channel. The chain is Accessory Sec system protein translocase subunit SecY2 from Staphylococcus haemolyticus (strain JCSC1435).